A 255-amino-acid chain; its full sequence is Small ribosomal subunit protein uS2 (255 aa).

The protein belongs to the universal ribosomal protein uS2 family.

The chain is Small ribosomal subunit protein uS2 from Streptococcus pyogenes serotype M49 (strain NZ131).